Here is a 206-residue protein sequence, read N- to C-terminus: uncharacterized protein (206 aa).

This is an uncharacterized protein from Aquifex aeolicus (strain VF5).